A 268-amino-acid polypeptide reads, in one-letter code: Enoyl-[acyl-carrier-protein] reductase [NADH] (268 aa).

Residues S20–I21, D64–V65, and I95–A96 each bind NAD(+). Y157 contributes to the substrate binding site. Residues K164 and I193 each contribute to the NAD(+) site.

It belongs to the short-chain dehydrogenases/reductases (SDR) family. FabI subfamily. Homodimer. Homotetramer.

It carries out the reaction a 2,3-saturated acyl-[ACP] + NAD(+) = a (2E)-enoyl-[ACP] + NADH + H(+). It catalyses the reaction a 2,3-saturated acyl-CoA + NAD(+) = a (2E)-enoyl-CoA + NADH + H(+). It participates in lipid metabolism; mycolic acid biosynthesis. Its function is as follows. Enoyl-ACP reductase of the type II fatty acid syntase (FAS-II) system, which is involved in the biosynthesis of mycolic acids, a major component of mycobacterial cell walls. Catalyzes the NADH-dependent reduction of the double bond of 2-trans-enoyl-[acyl-carrier protein], an essential step in the fatty acid elongation cycle of the FAS-II pathway. Shows preference for long-chain fatty acyl thioester substrates, and can also use 2-trans-enoyl-CoAs as alternative substrates. The mycobacterial FAS-II system utilizes the products of the FAS-I system as primers to extend fatty acyl chain lengths up to C56, forming the meromycolate chain that serves as the precursor for final mycolic acids. This Mycobacterium avium protein is Enoyl-[acyl-carrier-protein] reductase [NADH].